We begin with the raw amino-acid sequence, 144 residues long: Large ribosomal subunit protein uL15 (144 aa).

A disordered region spans residues 1–53 (MRLNTLSPAVGAKSAPKRVGRGIGSGLGKTAGRGHKGQKSRSGGGVRPGFEGG). Gly residues-rich tracts occupy residues 21–31 (RGIGSGLGKTA) and 42–52 (SGGGVRPGFEG).

This sequence belongs to the universal ribosomal protein uL15 family. As to quaternary structure, part of the 50S ribosomal subunit.

In terms of biological role, binds to the 23S rRNA. The sequence is that of Large ribosomal subunit protein uL15 from Shewanella amazonensis (strain ATCC BAA-1098 / SB2B).